The sequence spans 167 residues: Putative N-acetylgalactosamine-6-phosphate deacetylase (167 aa).

It belongs to the metallo-dependent hydrolases superfamily. NagA family.

It catalyses the reaction N-acetyl-D-galactosamine 6-phosphate + H2O = D-galactosamine 6-phosphate + acetate. The polypeptide is Putative N-acetylgalactosamine-6-phosphate deacetylase (agaA) (Escherichia coli (strain K12)).